The sequence spans 727 residues: MTVSENSVLETEVLVGGSAMPNERPGAMEPQNLSKMPEGFPRRSTVANGVRSRASRRFLVVGGALLLSLFAIYEMGAVFSIGGITPLEYLVLALFAVNFCWIALAFCSGIAGFLILLRKPRAKDLQVTELHTRTAILMPTYNESPDRVFSAVSVMAETLSQTGHGHAFDWFILSDTTDPDIALLEEQAFLVLRQETHKHSRVYYRRRRKNVARKAGNVADFCRRWGSRYDHLLVLDADSLMESSTITGLAQRMQADPDAGLIQTIPSLINGTTLMARLQQFAARIYGPVIGTGLGWWVQKEGNFWGHNAIIRTEAFMTAAGLPNLKGKPPFGGHIMSHDFVEAALIRRAGWSVVIAYDLPGSYEECPPSIIDLAVRDRRWCQGNLQHSRILPTKGLHWVSRLHLLTGIMAYLSSPFWLMLILTGLMLALQAHFIRPEYFTDQFSLFPTWPIMDSDRALRLFYITMGVLFGPKIFGVLLLLKDGEFARSVGGRIKAIFSVIFEVILSALIAPIMMFIHCGAVMSILMGRDSGWSPQRRDDGSMPWMTLIYRHRWHMLAGVMLGYAAILDSLTLLAWMSPALIGLWIAVPISAWTGSVKIGEVFKRAGILATPEERNPAQICLQAQDARAAYQKHIAEPWTLAQVLKDPALMELHLAMVDKQPLRAAGTPIEAMEAIVHVKVHEARCQQSALAVLNRQEMAMVLANPLMLRSLQKLPEQFVEEDLVSFC.

The interval 18–38 (SAMPNERPGAMEPQNLSKMPE) is disordered. 7 helical membrane passes run 58–78 (FLVV…MGAV), 97–117 (VNFC…LILL), 278–298 (LQQF…GWWV), 408–428 (IMAY…LMLA), 460–480 (LFYI…LLLL), 496–516 (IFSV…MMFI), and 572–592 (LLAW…ISAW).

The protein belongs to the glycosyltransferase 2 family. OpgH subfamily.

It is found in the cell inner membrane. Its pathway is glycan metabolism; osmoregulated periplasmic glucan (OPG) biosynthesis. In terms of biological role, involved in the biosynthesis of osmoregulated periplasmic glucans (OPGs). The protein is Glucans biosynthesis glucosyltransferase H of Shewanella baltica (strain OS223).